Reading from the N-terminus, the 271-residue chain is MEKEIYKMDFNDMTFKDIKDIVDGMKKVENIECLIYINDILMKDKRKTVQNLSQSINKFICRREEEIVRLKKMYDFDKKFANNVLIAGVDEVGRGPLAGPIVAAAVILDLNYKNHNDLFYGLKDSKKLRAKERENLSHIIKDKALYYNIFELDNHMIDTSGIAWCNNEVLKKSTLGLEVTPGIVISDGFSIKNINIKNEYIIKGDAKSASIAAASIIAKVYRDKKMEEYSKIYPHYGFEKNSGYGTDEHTKALKKYGPCPIHRMSFLSNYI.

In terms of domain architecture, RNase H type-2 spans 84–271 (VLIAGVDEVG…HRMSFLSNYI (188 aa)). Residues aspartate 90, glutamate 91, and aspartate 187 each coordinate a divalent metal cation.

The protein belongs to the RNase HII family. Requires Mn(2+) as cofactor. Mg(2+) serves as cofactor.

It localises to the cytoplasm. The catalysed reaction is Endonucleolytic cleavage to 5'-phosphomonoester.. Functionally, endonuclease that specifically degrades the RNA of RNA-DNA hybrids. The polypeptide is Ribonuclease HII (Clostridium tetani (strain Massachusetts / E88)).